The following is a 207-amino-acid chain: Ion-translocating oxidoreductase complex subunit G (207 aa).

A helical membrane pass occupies residues 11 to 31 (GILLGFIALLCTIISTGIFFL). At Thr175 the chain carries FMN phosphoryl threonine.

It belongs to the RnfG family. As to quaternary structure, the complex is composed of six subunits: RnfA, RnfB, RnfC, RnfD, RnfE and RnfG. It depends on FMN as a cofactor.

The protein resides in the cell inner membrane. Functionally, part of a membrane-bound complex that couples electron transfer with translocation of ions across the membrane. This Haemophilus influenzae (strain 86-028NP) protein is Ion-translocating oxidoreductase complex subunit G.